Reading from the N-terminus, the 421-residue chain is MEFPFDVDALFPERITVLDQHLRPPARRPGTTTPARVDLQQQIMTIIDELGKASAKAQNLSAPITSASRMQSNRHVVYILKDSSARPAGKGAIIGFIKVGYKKLFVLDDREAHNEVEPLCILDFYIHESVQRHGHGRELFQYMLQKERVEPHQLAIDRPSQKLLKFLNKHYNLETTVPQVNNFVIFEGFFAHQHRPPAPSLRATRHSRAAAVDPTPAAPARKLPPKRAEGDIKPYSSSDREFLKVAVEPPWPLNRAPRRATPPAHPPPRSSSLGNSPERGPLRPFVPEQELLRSLRLCPPHPTARLLLAADPGGSPAQRRRTRGTPPGLVAQSCCYSRHGGVNSSSPNTGNQDSKQGEQETKNRSASEEQALSQDGSGEKPMHTAPPQAPAPPAQSWTVGGDILNARFIRNLQERRSTRPW.

Residues 1 to 190 (MEFPFDVDAL…NNFVIFEGFF (190 aa)) form the N-acetyltransferase domain. Lysine 56 is modified (N6-acetyllysine; by autocatalysis). 124-137 (FYIHESVQRHGHGR) lines the acetyl-CoA pocket. The residue at position 146 (lysine 146) is an N6-acetyllysine; by autocatalysis. 160–169 (SQKLLKFLNK) provides a ligand contact to acetyl-CoA. The tract at residues 196-235 (PPAPSLRATRHSRAAAVDPTPAAPARKLPPKRAEGDIKPY) is disordered. Residues 209-221 (AAAVDPTPAAPAR) are compositionally biased toward low complexity. Over residues 226-235 (KRAEGDIKPY) the composition is skewed to basic and acidic residues. Residues lysine 233 and lysine 244 each carry the N6-acetyllysine; by autocatalysis modification. The tract at residues 252 to 284 (PLNRAPRRATPPAHPPPRSSSLGNSPERGPLRP) is disordered. Residues serine 272 and serine 276 each carry the phosphoserine modification. An Asymmetric dimethylarginine modification is found at arginine 305. The interval 306-402 (LLLAADPGGS…PAQSWTVGGD (97 aa)) is disordered. Phosphoserine is present on serine 315. Arginine 323 is subject to Omega-N-methylarginine. Over residues 342-354 (VNSSSPNTGNQDS) the composition is skewed to polar residues. Over residues 355 to 367 (KQGEQETKNRSAS) the composition is skewed to basic and acidic residues.

The protein belongs to the acetyltransferase ATAT1 family. Component of the BBSome complex. Interacts with AP2 alpha-adaptins, including AP2A2, but not with AP1 gamma-adaptin (AP1G1/AP1G2); this interaction is required for efficient alpha-tubulin acetylation, hence clathrin-coated pits are sites of microtubule acetylation. In terms of processing, autoacetylation strongly increases tubulin acetylation.

Its subcellular location is the cytoplasm. It localises to the membrane. The protein resides in the clathrin-coated pit. It is found in the cell junction. The protein localises to the focal adhesion. Its subcellular location is the cell projection. It localises to the axon. The protein resides in the cytoskeleton. It is found in the spindle. It carries out the reaction L-lysyl-[alpha-tubulin] + acetyl-CoA = N(6)-acetyl-L-lysyl-[alpha-tubulin] + CoA + H(+). Its function is as follows. Specifically acetylates 'Lys-40' in alpha-tubulin on the lumenal side of microtubules. Promotes microtubule destabilization and accelerates microtubule dynamics; this activity may be independent of acetylation activity. Acetylates alpha-tubulin with a slow enzymatic rate, due to a catalytic site that is not optimized for acetyl transfer. Enters the microtubule through each end and diffuses quickly throughout the lumen of microtubules. Acetylates only long/old microtubules because of its slow acetylation rate since it does not have time to act on dynamically unstable microtubules before the enzyme is released. Required for normal sperm flagellar function. Promotes directional cell locomotion and chemotaxis, through AP2A2-dependent acetylation of alpha-tubulin at clathrin-coated pits that are concentrated at the leading edge of migrating cells. May facilitate primary cilium assembly. The chain is Alpha-tubulin N-acetyltransferase 1 from Homo sapiens (Human).